The chain runs to 1192 residues: Leucine-rich repeat receptor protein kinase EMS1 (1192 aa).

The signal sequence occupies residues 1-18 (MAFLTALFLFLFFSFSSS). An N-linked (GlcNAc...) asparagine glycan is attached at N47. LRR repeat units follow at residues 64 to 87 (LGRVNSLSLPSLSLRGQIPKEISS), 90 to 112 (NLRELCLAGNQFSGKIPPEIWNL), 114 to 137 (HLQTLDLSGNSLTGLLPRLLSELP), 138 to 160 (QLLYLDLSDNHFSGSLPPSFFIS), 163 to 185 (ALSSLDVSNNSLSGEIPPEIGKL), 187 to 209 (NLSNLYMGLNSFSGQIPSEIGNI), 235 to 257 (HLAKLDLSYNPLKCSIPKSFGEL), 259 to 281 (NLSILNLVSAELIGLIPPELGNC), 283 to 304 (SLKSLMLSFNSLSGPLPLELSE), 330 to 352 (VLDSLLLANNRFSGEIPHEIEDC), 354 to 376 (MLKHLSLASNLLSGSIPRELCGS), 378 to 400 (SLEAIDLSGNLLSGTIEEVFDGC), 402 to 425 (SLGELLLTNNQINGSIPEDLWKLP), 426 to 447 (LMALDLDSNNFTGEIPKSLWKS), 449 to 471 (NLMEFTASYNRLEGYLPAEIGNA), 473 to 496 (SLKRLVLSDNQLTGEIPREIGKLT), 497 to 520 (SLSVLNLNANMFQGKIPVELGDCT), 521 to 543 (SLTTLDLGSNNLQGQIPDKITAL), 545 to 567 (QLQCLVLSYNNLSGSIPSKPSAY), 581 to 603 (HHGIFDLSYNRLSGPIPEELGEC), 605 to 628 (VLVEISLSNNHLSGEIPASLSRLT), 629 to 651 (NLTILDLSGNALTGSIPKEMGNS), 653 to 675 (KLQGLNLANNQLNGHIPESFGLL), 677 to 697 (SLVKLNLTKNKLDGPVPASLG), 701 to 723 (ELTHMDLSFNNLSGELSSELSTM), 725 to 748 (KLVGLYIEQNKFTGEIPSELGNLT), 749 to 772 (QLEYLDVSENLLSGEIPTKICGLP), and 773 to 795 (NLEFLNLAKNNLRGEVPSDGVCQ). N-linked (GlcNAc...) asparagine glycosylation is found at N171, N187, and N208. N-linked (GlcNAc...) asparagine glycosylation occurs at N259. Residues N414 and N435 are each glycosylated (N-linked (GlcNAc...) asparagine). N555 carries an N-linked (GlcNAc...) asparagine glycan. N629 carries an N-linked (GlcNAc...) asparagine glycan. 3 N-linked (GlcNAc...) asparagine glycosylation sites follow: N682, N711, and N746. The helical transmembrane segment at 828 to 848 (WGIAGLMLGFTIIVFVFVFSL) threads the bilayer. Phosphothreonine is present on T914. Residues 917–1192 (FSKKNIIGDG…LDVLKALKEI (276 aa)) enclose the Protein kinase domain. ATP is bound by residues 923 to 931 (IGDGGFGTV) and K945. Residue Y990 is modified to Phosphotyrosine. D1043 serves as the catalytic Proton acceptor. Y1085 bears the Phosphotyrosine mark.

The protein belongs to the protein kinase superfamily. Ser/Thr protein kinase family. As to quaternary structure, interacts with TPD1. Autophosphorylates in vitro. As to expression, present in young buds, open flowers and siliques but absent from mature leaves and roots. Strongly expressed in the young organ primordia, and as the anthers and ovules developed, became focused in the microsporangia and in the distal and chalazal regions of the ovule. In cv. Landsberg erecta, only expressed in the anthers of young floral buds.

It localises to the cell membrane. It carries out the reaction L-seryl-[protein] + ATP = O-phospho-L-seryl-[protein] + ADP + H(+). It catalyses the reaction L-threonyl-[protein] + ATP = O-phospho-L-threonyl-[protein] + ADP + H(+). Receptor with a serine/threonine-protein kinase activity required for the specification of the correct number of male archesporial initials and for the subsequent specification of tapetal and middle cell layer identities. In seeds, required for enhancing cell size and the rate of embryonic development. In Arabidopsis thaliana (Mouse-ear cress), this protein is Leucine-rich repeat receptor protein kinase EMS1.